The following is a 20-amino-acid chain: ARAVGIDLGTTNAVVAVLEG.

The protein belongs to the heat shock protein 70 family.

Acts as a chaperone. The protein is Chaperone protein DnaK (dnaK) of Mycobacterium avium.